Reading from the N-terminus, the 62-residue chain is uncharacterized protein (62 aa).

Residues 26 to 62 are a coiled coil; sequence YELATLYEAMQKENEEQIEQSKNKLERLRKEWIRLNG.

This is an uncharacterized protein from Bacillus subtilis (strain 168).